We begin with the raw amino-acid sequence, 307 residues long: Quinolinate synthase (307 aa).

2 residues coordinate iminosuccinate: H23 and S40. C86 is a [4Fe-4S] cluster binding site. Iminosuccinate-binding positions include 112–114 (YVN) and S129. [4Fe-4S] cluster is bound at residue C173. Iminosuccinate is bound by residues 199–201 (HPE) and T216. C265 contributes to the [4Fe-4S] cluster binding site.

This sequence belongs to the quinolinate synthase family. Type 2 subfamily. Requires [4Fe-4S] cluster as cofactor.

The protein resides in the cytoplasm. It carries out the reaction iminosuccinate + dihydroxyacetone phosphate = quinolinate + phosphate + 2 H2O + H(+). It functions in the pathway cofactor biosynthesis; NAD(+) biosynthesis; quinolinate from iminoaspartate: step 1/1. Catalyzes the condensation of iminoaspartate with dihydroxyacetone phosphate to form quinolinate. The sequence is that of Quinolinate synthase from Methanocaldococcus jannaschii (strain ATCC 43067 / DSM 2661 / JAL-1 / JCM 10045 / NBRC 100440) (Methanococcus jannaschii).